A 397-amino-acid chain; its full sequence is MEIFKKASSIIETLKQQGHEAYFVGGSVRDLIIDRPIGDIDIATSALPEEVMGIFPRHVPVGLEHGTVIVVENGEPYEVTTFRTESEYEDFRRPSSVQFVRSLEEDLKRRDFTMNAIAMTEEGEMVDLFAGQEAIQKREIVTVGNAADRFQEDALRMMRGIRFVSTLGFSLETKTKQAIETYGHLLEHIAIERITVEFEKLLTGTYCVKGLKELVETKLFSHLPYLQMSEERLLKATQYNWDSFETDIEAWAFFLYCIGEEHPSVFLRQWKFSNKKIKDIVAVLLTIRKRKEKDWDTVLLYKTGIHIAEMSERVYEAMIESYDNTSVKRVQTLFEALPIKSRQEMNVTGNDLLNWANKKPGPWVAEMIQNIEEAIVQGNVVNEKECIREWLQECNLL.

Positions 26 and 29 each coordinate ATP. Positions 26 and 29 each coordinate CTP. The Mg(2+) site is built by Asp39 and Asp41. ATP-binding residues include Arg110, Asp153, Arg156, Arg159, and Arg162. Residues Arg110, Asp153, Arg156, Arg159, and Arg162 each coordinate CTP.

This sequence belongs to the tRNA nucleotidyltransferase/poly(A) polymerase family. Bacterial CCA-adding enzyme type 3 subfamily. As to quaternary structure, homodimer. The cofactor is Mg(2+).

It carries out the reaction a tRNA precursor + 2 CTP + ATP = a tRNA with a 3' CCA end + 3 diphosphate. It catalyses the reaction a tRNA with a 3' CCA end + 2 CTP + ATP = a tRNA with a 3' CCACCA end + 3 diphosphate. Catalyzes the addition and repair of the essential 3'-terminal CCA sequence in tRNAs without using a nucleic acid template. Adds these three nucleotides in the order of C, C, and A to the tRNA nucleotide-73, using CTP and ATP as substrates and producing inorganic pyrophosphate. tRNA 3'-terminal CCA addition is required both for tRNA processing and repair. Also involved in tRNA surveillance by mediating tandem CCA addition to generate a CCACCA at the 3' terminus of unstable tRNAs. While stable tRNAs receive only 3'-terminal CCA, unstable tRNAs are marked with CCACCA and rapidly degraded. In Bacillus cereus (strain 03BB102), this protein is CCA-adding enzyme.